The primary structure comprises 114 residues: uncharacterized protein (114 aa).

To M.kandleri MK0008.

This is an uncharacterized protein from Methanocaldococcus jannaschii (strain ATCC 43067 / DSM 2661 / JAL-1 / JCM 10045 / NBRC 100440) (Methanococcus jannaschii).